The following is a 103-amino-acid chain: Putative membrane protein insertion efficiency factor (103 aa).

It belongs to the UPF0161 family.

Its subcellular location is the cell membrane. Could be involved in insertion of integral membrane proteins into the membrane. In Clavibacter sepedonicus (Clavibacter michiganensis subsp. sepedonicus), this protein is Putative membrane protein insertion efficiency factor.